Consider the following 737-residue polypeptide: Phosphoribosylformylglycinamidine synthase subunit PurL (737 aa).

Residue H48 is part of the active site. Residues Y51 and K90 each coordinate ATP. Position 92 (E92) interacts with Mg(2+). Substrate is bound by residues S93–H96 and R115. Residue H94 is the Proton acceptor of the active site. Position 116 (D116) interacts with Mg(2+). Residue Q244 coordinates substrate. D272 lines the Mg(2+) pocket. E316–Q318 provides a ligand contact to substrate. D500 and G537 together coordinate ATP. N538 is a binding site for Mg(2+). S540 is a binding site for substrate.

This sequence belongs to the FGAMS family. In terms of assembly, monomer. Part of the FGAM synthase complex composed of 1 PurL, 1 PurQ and 2 PurS subunits.

It is found in the cytoplasm. The catalysed reaction is N(2)-formyl-N(1)-(5-phospho-beta-D-ribosyl)glycinamide + L-glutamine + ATP + H2O = 2-formamido-N(1)-(5-O-phospho-beta-D-ribosyl)acetamidine + L-glutamate + ADP + phosphate + H(+). It participates in purine metabolism; IMP biosynthesis via de novo pathway; 5-amino-1-(5-phospho-D-ribosyl)imidazole from N(2)-formyl-N(1)-(5-phospho-D-ribosyl)glycinamide: step 1/2. Part of the phosphoribosylformylglycinamidine synthase complex involved in the purines biosynthetic pathway. Catalyzes the ATP-dependent conversion of formylglycinamide ribonucleotide (FGAR) and glutamine to yield formylglycinamidine ribonucleotide (FGAM) and glutamate. The FGAM synthase complex is composed of three subunits. PurQ produces an ammonia molecule by converting glutamine to glutamate. PurL transfers the ammonia molecule to FGAR to form FGAM in an ATP-dependent manner. PurS interacts with PurQ and PurL and is thought to assist in the transfer of the ammonia molecule from PurQ to PurL. The sequence is that of Phosphoribosylformylglycinamidine synthase subunit PurL from Sulfurimonas denitrificans (strain ATCC 33889 / DSM 1251) (Thiomicrospira denitrificans (strain ATCC 33889 / DSM 1251)).